A 769-amino-acid chain; its full sequence is Homoaconitase, mitochondrial (769 aa).

The N-terminal 28 residues, 1 to 28, are a transit peptide targeting the mitochondrion; that stretch reads MQSRLLPSGPGRRWISLRVPNTPQRRAF. The [4Fe-4S] cluster site is built by Cys391, Cys460, and Cys463.

Belongs to the aconitase/IPM isomerase family. It depends on [4Fe-4S] cluster as a cofactor.

It localises to the mitochondrion. It carries out the reaction (2R,3S)-homoisocitrate = cis-homoaconitate + H2O. The protein operates within amino-acid biosynthesis; L-lysine biosynthesis via AAA pathway; L-alpha-aminoadipate from 2-oxoglutarate: step 3/5. Its function is as follows. Catalyzes the reversible hydration of cis-homoaconitate to (2R,3S)-homoisocitrate, a step in the alpha-aminoadipate pathway for lysine biosynthesis. The sequence is that of Homoaconitase, mitochondrial (lysA) from Aspergillus niger (strain ATCC MYA-4892 / CBS 513.88 / FGSC A1513).